Reading from the N-terminus, the 518-residue chain is GMP synthase [glutamine-hydrolyzing] (518 aa).

Positions 8–201 (TVLIIDFGSQ…VHKISGLKGN (194 aa)) constitute a Glutamine amidotransferase type-1 domain. Cysteine 85 serves as the catalytic Nucleophile. Catalysis depends on residues histidine 175 and glutamate 177. A GMPS ATP-PPase domain is found at 202–393 (WSMASYRDQA…LGLPEQFLGR (192 aa)). 229-235 (SGGVDSS) provides a ligand contact to ATP.

In terms of assembly, homodimer.

The catalysed reaction is XMP + L-glutamine + ATP + H2O = GMP + L-glutamate + AMP + diphosphate + 2 H(+). The protein operates within purine metabolism; GMP biosynthesis; GMP from XMP (L-Gln route): step 1/1. In terms of biological role, catalyzes the synthesis of GMP from XMP. This chain is GMP synthase [glutamine-hydrolyzing], found in Bartonella quintana (strain Toulouse) (Rochalimaea quintana).